The sequence spans 615 residues: DNA mismatch repair protein MutL (615 aa).

The interval 363–397 is disordered; it reads FAEPAVREPVAPRYTPAPASGSRPAAPWPNAQPGY. Residues 378–391 show a composition bias toward low complexity; the sequence is PAPASGSRPAAPWP.

The protein belongs to the DNA mismatch repair MutL/HexB family.

Functionally, this protein is involved in the repair of mismatches in DNA. It is required for dam-dependent methyl-directed DNA mismatch repair. May act as a 'molecular matchmaker', a protein that promotes the formation of a stable complex between two or more DNA-binding proteins in an ATP-dependent manner without itself being part of a final effector complex. This is DNA mismatch repair protein MutL from Escherichia coli O157:H7 (strain EC4115 / EHEC).